We begin with the raw amino-acid sequence, 129 residues long: UPF0325 protein YE3288 (129 aa).

This sequence belongs to the UPF0325 family.

This Yersinia enterocolitica serotype O:8 / biotype 1B (strain NCTC 13174 / 8081) protein is UPF0325 protein YE3288.